A 289-amino-acid chain; its full sequence is Bifunctional aminodeoxychorismate lyase / D-amino acid transaminase (289 aa).

Position 50 (R50) interacts with pyridoxal 5'-phosphate. An N6-(pyridoxal phosphate)lysine modification is found at K149. Pyridoxal 5'-phosphate-binding residues include Y153, T216, and T217. S252 contacts 2-oxoglutarate. Residue S253 coordinates pyridoxal 5'-phosphate. The 2-oxoglutarate site is built by M254 and T255.

This sequence belongs to the class-IV pyridoxal-phosphate-dependent aminotransferase family. In terms of assembly, homodimer. It depends on pyridoxal 5'-phosphate as a cofactor.

The enzyme catalyses 4-amino-4-deoxychorismate = 4-aminobenzoate + pyruvate + H(+). It carries out the reaction D-alanine + 2-oxoglutarate = D-glutamate + pyruvate. Its pathway is cofactor biosynthesis; tetrahydrofolate biosynthesis; 4-aminobenzoate from chorismate: step 2/2. It participates in cell wall biogenesis; peptidoglycan biosynthesis. Functionally, bifunctional enzyme that catalyzes two enzymatic reactions in biochemically unrelated pathways: acts as an aminodeoxychorismate (ADC) lyase (ADCL) in folate biosynthesis, converting 4-amino-4-deoxychorismate (ADC) to 4-aminobenzoate (PABA), and as a D-amino acid transaminase (DAAT) in peptidoglycan (PG) biosynthesis. DAAT activity is strictly restricted to D-alanine and D-glutamate. May function as a metabolic toggle that alternates between ADCL and DAAT activity, prioritizing the former over the latter in response to substrate accumulation. Bifunctionality of this enzyme provides a failsafe mechanism for a metabolic coupling between nucleic acid and cell wall biosynthesis that appears to ensure prioritization of PABA production over D-alanine/D-glutamate biosynthesis. This is Bifunctional aminodeoxychorismate lyase / D-amino acid transaminase from Mycobacterium tuberculosis (strain ATCC 25618 / H37Rv).